The chain runs to 119 residues: Ribonuclease P protein component (119 aa).

Belongs to the RnpA family. As to quaternary structure, consists of a catalytic RNA component (M1 or rnpB) and a protein subunit.

It carries out the reaction Endonucleolytic cleavage of RNA, removing 5'-extranucleotides from tRNA precursor.. In terms of biological role, RNaseP catalyzes the removal of the 5'-leader sequence from pre-tRNA to produce the mature 5'-terminus. It can also cleave other RNA substrates such as 4.5S RNA. The protein component plays an auxiliary but essential role in vivo by binding to the 5'-leader sequence and broadening the substrate specificity of the ribozyme. This is Ribonuclease P protein component from Nitrosomonas europaea (strain ATCC 19718 / CIP 103999 / KCTC 2705 / NBRC 14298).